A 227-amino-acid chain; its full sequence is uncharacterized protein (227 aa).

The next 7 helical transmembrane spans lie at 15–34 (FIAA…FLIY), 55–77 (TFLF…ASGV), 92–114 (AFSM…YSLL), 121–140 (FPGE…TSLL), 145–167 (LVFL…VNYS), 180–202 (PLYI…FLPL), and 206–224 (FAIY…YRVL).

It is found in the cell membrane. This is an uncharacterized protein from Archaeoglobus fulgidus (strain ATCC 49558 / DSM 4304 / JCM 9628 / NBRC 100126 / VC-16).